The sequence spans 556 residues: Acetyl-coenzyme A thioesterase (556 aa).

The region spanning 6 to 118 (APGEVLMSQA…FSTFVAKPVG (113 aa)) is the HotDog ACOT-type 1 domain. Residue Lys34 is modified to N6-succinyllysine. Residues 54-56 (TAS) and 83-85 (STS) each bind CoA. Lys97 carries the N6-succinyllysine modification. CoA is bound at residue Arg145. An N6-succinyllysine mark is found at Lys160 and Lys229. One can recognise a HotDog ACOT-type 2 domain in the interval 180 to 295 (MGTSVQSIEL…FLIYNAVDDQ (116 aa)). A CoA-binding site is contributed by 235–237 (KFR). One can recognise an START domain in the interval 327 to 536 (GRKYVISHKK…GGWSKSIEEA (210 aa)).

In terms of assembly, homodimer or homotetramer.

The protein localises to the cytoplasm. Its subcellular location is the cytosol. The enzyme catalyses acetyl-CoA + H2O = acetate + CoA + H(+). The catalysed reaction is butanoyl-CoA + H2O = butanoate + CoA + H(+). It carries out the reaction hexanoyl-CoA + H2O = hexanoate + CoA + H(+). It participates in lipid metabolism; fatty acid metabolism. With respect to regulation, allosterically regulated by ATP (activator) and ADP (inhibitor). Cold labile, it dissociates into inactive monomers at low temperature. Functionally, catalyzes the hydrolysis of acyl-CoAs into free fatty acids and coenzyme A (CoASH), regulating their respective intracellular levels. Preferentially hydrolyzes acetyl-CoA. The chain is Acetyl-coenzyme A thioesterase (Acot12) from Mus musculus (Mouse).